Consider the following 116-residue polypeptide: uncharacterized protein (116 aa).

A run of 2 helical transmembrane segments spans residues 40-60 and 72-92; these read AIVK…IGIL and FLGS…VVPI.

It is found in the membrane. This is an uncharacterized protein from Saccharomyces cerevisiae (strain ATCC 204508 / S288c) (Baker's yeast).